The following is a 156-amino-acid chain: MMKEETRTGIGLKDVSIRLVSESPLLPVGGFVYCEYGIPVRYLKIDENEVKLEISVEKLKNLSRVCENIEQVVDKVVEELRYALPEGVFTIAKVYANGIKLRELSYLEEYTSVGKGIIIDEDRELDQEMPAYVKENRETILGTIREVILLELMYSS.

A coiled-coil region spans residues 43–84 (LKIDENEVKLEISVEKLKNLSRVCENIEQVVDKVVEELRYAL).

This is an uncharacterized protein from Aquifex aeolicus (strain VF5).